Here is a 361-residue protein sequence, read N- to C-terminus: Probable sugar phosphate/phosphate translocator At1g12500 (361 aa).

Val2 carries the post-translational modification N-acetylvaline. 9 consecutive transmembrane segments (helical) span residues Thr56–Leu76, Ile90–Ile110, Phe125–Ser145, Phe153–Thr173, Ile192–Ala212, Leu240–Glu260, Leu276–Phe296, Thr306–Phe326, and Pro329–Ser349. Residues Pro89 to Ser196 form the EamA domain.

This sequence belongs to the TPT transporter family. TPT (TC 2.A.7.9) subfamily.

The protein localises to the membrane. The polypeptide is Probable sugar phosphate/phosphate translocator At1g12500 (Arabidopsis thaliana (Mouse-ear cress)).